The following is a 138-amino-acid chain: MSTIHVDVVSATESLYSGEVSCVFAPASTGELGIYPKHTALLSILKPGEVRVETDKGVESIYISGGIIEVQPDVVTIFSDTAIRADNLDESKALEAKQRAQEAIENATESQDISAIQVALAESIAQLQMINKIRSKKI.

Belongs to the ATPase epsilon chain family. In terms of assembly, F-type ATPases have 2 components, CF(1) - the catalytic core - and CF(0) - the membrane proton channel. CF(1) has five subunits: alpha(3), beta(3), gamma(1), delta(1), epsilon(1). CF(0) has three main subunits: a, b and c.

It is found in the cell inner membrane. Functionally, produces ATP from ADP in the presence of a proton gradient across the membrane. This Ruthia magnifica subsp. Calyptogena magnifica protein is ATP synthase epsilon chain.